The chain runs to 142 residues: Large ribosomal subunit protein uL13 (142 aa).

The protein belongs to the universal ribosomal protein uL13 family. In terms of assembly, part of the 50S ribosomal subunit.

Its function is as follows. This protein is one of the early assembly proteins of the 50S ribosomal subunit, although it is not seen to bind rRNA by itself. It is important during the early stages of 50S assembly. This chain is Large ribosomal subunit protein uL13, found in Vibrio parahaemolyticus serotype O3:K6 (strain RIMD 2210633).